The sequence spans 279 residues: Tryptophan synthase alpha chain (279 aa).

Active-site proton acceptor residues include Glu50 and Asp61.

This sequence belongs to the TrpA family. Tetramer of two alpha and two beta chains.

The enzyme catalyses (1S,2R)-1-C-(indol-3-yl)glycerol 3-phosphate + L-serine = D-glyceraldehyde 3-phosphate + L-tryptophan + H2O. It functions in the pathway amino-acid biosynthesis; L-tryptophan biosynthesis; L-tryptophan from chorismate: step 5/5. Its function is as follows. The alpha subunit is responsible for the aldol cleavage of indoleglycerol phosphate to indole and glyceraldehyde 3-phosphate. This Brucella melitensis biotype 2 (strain ATCC 23457) protein is Tryptophan synthase alpha chain.